The primary structure comprises 832 residues: Valine--tRNA ligase (832 aa).

A 'HIGH' region motif is present at residues 41-51; it reads PNVTGKLHLGH. The 'KMSKS' region signature appears at 512 to 516; sequence KMSKS. Residue Lys515 participates in ATP binding. A coiled-coil region spans residues 760–831; that stretch reads FIEISQEQKQ…QIYLEELKWK (72 aa).

The protein belongs to the class-I aminoacyl-tRNA synthetase family. ValS type 1 subfamily. In terms of assembly, monomer.

It is found in the cytoplasm. The enzyme catalyses tRNA(Val) + L-valine + ATP = L-valyl-tRNA(Val) + AMP + diphosphate. Its function is as follows. Catalyzes the attachment of valine to tRNA(Val). As ValRS can inadvertently accommodate and process structurally similar amino acids such as threonine, to avoid such errors, it has a 'posttransfer' editing activity that hydrolyzes mischarged Thr-tRNA(Val) in a tRNA-dependent manner. The protein is Valine--tRNA ligase of Mycoplasmopsis synoviae (strain 53) (Mycoplasma synoviae).